A 274-amino-acid polypeptide reads, in one-letter code: MAVTIQDIAKLRKMSGAGMMDCKNALEESNNDFEKAMEIIRKKGQAVAAKRSDREAAEGCVLSADKDGFAAIVALKCETDFVAKNAEFIELTQNILNTAMDKKPANKEELLALPLADGRTIADHITDRIGVTGEKMELGAYEYISGASSISYIHPGNKLATVAAFNEAIEHQMARDIAMQIAAMNPVAVLPEQVDQHIIDQELQIAREKALEAGKPENLLDRIAQGALQKYYKENTLLQQEFVKDSKLTIEQYLHTGSKTLTVVGFKRFTLNAD.

The interval 79 to 82 (TDFV) is involved in Mg(2+) ion dislocation from EF-Tu.

It belongs to the EF-Ts family.

Its subcellular location is the cytoplasm. Functionally, associates with the EF-Tu.GDP complex and induces the exchange of GDP to GTP. It remains bound to the aminoacyl-tRNA.EF-Tu.GTP complex up to the GTP hydrolysis stage on the ribosome. The protein is Elongation factor Ts of Porphyromonas gingivalis (strain ATCC 33277 / DSM 20709 / CIP 103683 / JCM 12257 / NCTC 11834 / 2561).